Here is a 128-residue protein sequence, read N- to C-terminus: Small ribosomal subunit protein uS9 (128 aa).

The tract at residues 107–128 (RAVERKKPGRPKARKRFQFSKR) is disordered. Residues 113–128 (KPGRPKARKRFQFSKR) show a composition bias toward basic residues.

This sequence belongs to the universal ribosomal protein uS9 family.

The chain is Small ribosomal subunit protein uS9 from Parabacteroides distasonis (strain ATCC 8503 / DSM 20701 / CIP 104284 / JCM 5825 / NCTC 11152).